Here is a 546-residue protein sequence, read N- to C-terminus: Hexose oxidase (546 aa).

Positions 40–222 constitute an FAD-binding PCMH-type domain; it reads IGTNIDFVYV…TKYYFKDLPM (183 aa). Residues 79–138 constitute a cross-link (6-(S-cysteinyl)-8alpha-(pros-histidyl)-FAD (His-Cys)); the sequence is HCYEDFVFDECVKAIINVTGLVESGYDDDRGYFVSSGDTNWGSFKTLFRDHGRVLPGGSC. Asn-95 and Asn-358 each carry an N-linked (GlcNAc...) asparagine glycan.

Belongs to the oxygen-dependent FAD-linked oxidoreductase family. As to quaternary structure, homodimer. FAD serves as cofactor. In terms of processing, cleaved into 40 kDa and 29 kDa cleavage products, but the 2 polypeptide chains do not separate and seem to be physically linked together. Post-translationally, the FAD cofactor is bound via a bicovalent 6-S-cysteinyl, 8alpha-N1-histidyl FAD linkage.

The enzyme catalyses beta-D-glucose + O2 = D-glucono-1,5-lactone + H2O2. The catalysed reaction is D-galactose + O2 = D-galactono-1,5-lactone + H2O2. It carries out the reaction D-maltose + O2 = D-maltobiono-1,5-lactone + H2O2. It catalyses the reaction D-cellobiose + O2 = D-cellobiono-1,5-lactone + H2O2. The enzyme catalyses beta-lactose + O2 = lactobiono-1,5-lactone + H2O2. Catalyzes the selective oxidation of C1 hydroxyl moieties on mono- and disaccharides with concomitant reduction of molecular oxygen to hydrogen peroxide. This results in the formation of the corresponding lactones, which typically undergo spontaneous hydrolysis. Hexose oxidase is able to oxidize a variety of substrates including D-glucose, D-galactose, maltose, cellobiose, and lactose. The protein is Hexose oxidase (HOX) of Chondrus crispus (Carrageen Irish moss).